Consider the following 170-residue polypeptide: Ribosome maturation factor RimM (170 aa).

The region spanning 97–170 (KPDEYYWVDL…LVVVDWDPEF (74 aa)) is the PRC barrel domain.

Belongs to the RimM family. As to quaternary structure, binds ribosomal protein uS19.

The protein localises to the cytoplasm. Its function is as follows. An accessory protein needed during the final step in the assembly of 30S ribosomal subunit, possibly for assembly of the head region. Essential for efficient processing of 16S rRNA. May be needed both before and after RbfA during the maturation of 16S rRNA. It has affinity for free ribosomal 30S subunits but not for 70S ribosomes. The chain is Ribosome maturation factor RimM from Stenotrophomonas maltophilia (strain K279a).